Reading from the N-terminus, the 467-residue chain is Glutamyl-tRNA(Gln) amidotransferase subunit A (467 aa).

Catalysis depends on charge relay system residues lysine 57 and serine 132. The active-site Acyl-ester intermediate is serine 156.

This sequence belongs to the amidase family. GatA subfamily. Heterotrimer of A, B and C subunits.

The enzyme catalyses L-glutamyl-tRNA(Gln) + L-glutamine + ATP + H2O = L-glutaminyl-tRNA(Gln) + L-glutamate + ADP + phosphate + H(+). In terms of biological role, allows the formation of correctly charged Gln-tRNA(Gln) through the transamidation of misacylated Glu-tRNA(Gln) in organisms which lack glutaminyl-tRNA synthetase. The reaction takes place in the presence of glutamine and ATP through an activated gamma-phospho-Glu-tRNA(Gln). The sequence is that of Glutamyl-tRNA(Gln) amidotransferase subunit A from Pseudothermotoga lettingae (strain ATCC BAA-301 / DSM 14385 / NBRC 107922 / TMO) (Thermotoga lettingae).